The chain runs to 497 residues: Cytochrome P450 2D6 (497 aa).

D301 is a binding site for substrate. Position 443 (C443) interacts with heme.

It belongs to the cytochrome P450 family. Heme is required as a cofactor.

The protein localises to the endoplasmic reticulum membrane. It is found in the microsome membrane. It carries out the reaction (5Z,8Z,11Z,14Z)-eicosatetraenoate + reduced [NADPH--hemoprotein reductase] + O2 = (8R,9S)-epoxy-(5Z,11Z,14Z)-eicosatrienoate + oxidized [NADPH--hemoprotein reductase] + H2O + H(+). The enzyme catalyses (5Z,8Z,11Z,14Z)-eicosatetraenoate + reduced [NADPH--hemoprotein reductase] + O2 = (11R,12S)-epoxy-(5Z,8Z,14Z)-eicosatrienoate + oxidized [NADPH--hemoprotein reductase] + H2O + H(+). It catalyses the reaction (5Z,8Z,11Z,14Z)-eicosatetraenoate + reduced [NADPH--hemoprotein reductase] + O2 = (14S,15R)-epoxy-(5Z,8Z,11Z)-eicosatrienoate + oxidized [NADPH--hemoprotein reductase] + H2O + H(+). The catalysed reaction is N-(5Z,8Z,11Z,14Z-eicosatetraenoyl)-ethanolamine + reduced [NADPH--hemoprotein reductase] + O2 = N-(8,9-epoxy-5Z,11Z,14Z-eicosatrienoyl)-ethanolamine + oxidized [NADPH--hemoprotein reductase] + H2O + H(+). It carries out the reaction N-(5Z,8Z,11Z,14Z-eicosatetraenoyl)-ethanolamine + reduced [NADPH--hemoprotein reductase] + O2 = N-(11,12-epoxy-5Z,8Z,14Z-eicosatrienoyl)-ethanolamine + oxidized [NADPH--hemoprotein reductase] + H2O + H(+). The enzyme catalyses N-(5Z,8Z,11Z,14Z-eicosatetraenoyl)-ethanolamine + reduced [NADPH--hemoprotein reductase] + O2 = N-(14,15-epoxy-5Z,8Z,11Z-eicosatrienoyl)-ethanolamine + oxidized [NADPH--hemoprotein reductase] + H2O + H(+). It catalyses the reaction N-(5Z,8Z,11Z,14Z-eicosatetraenoyl)-ethanolamine + reduced [NADPH--hemoprotein reductase] + O2 = N-(20-hydroxy-5Z,8Z,11Z,14Z-eicosatetraenoyl)-ethanolamine + oxidized [NADPH--hemoprotein reductase] + H2O + H(+). The catalysed reaction is (5Z,8Z,11Z,14Z,17Z)-eicosapentaenoate + reduced [NADPH--hemoprotein reductase] + O2 = (17S,18R)-epoxy-(5Z,8Z,11Z,14Z)-eicosatetraenoate + oxidized [NADPH--hemoprotein reductase] + H2O + H(+). It carries out the reaction (4Z,7Z,10Z,13Z,16Z,19Z)-docosahexaenoate + reduced [NADPH--hemoprotein reductase] + O2 = (19R,20S)-epoxy-(4Z,7Z,10Z,13Z,16Z)-docosapentaenoate + oxidized [NADPH--hemoprotein reductase] + H2O + H(+). The enzyme catalyses (4Z,7Z,10Z,13Z,16Z,19Z)-docosahexaenoate + reduced [NADPH--hemoprotein reductase] + O2 = (19S,20R)-epoxy-(4Z,7Z,10Z,13Z,16Z)-docosapentaenoate + oxidized [NADPH--hemoprotein reductase] + H2O + H(+). It catalyses the reaction cholesterol + reduced [NADPH--hemoprotein reductase] + O2 = 25-hydroxycholesterol + oxidized [NADPH--hemoprotein reductase] + H2O + H(+). The catalysed reaction is all-trans-retinol + reduced [NADPH--hemoprotein reductase] + O2 = all-trans-retinal + oxidized [NADPH--hemoprotein reductase] + 2 H2O + H(+). It participates in cofactor metabolism; retinol metabolism. The protein operates within lipid metabolism; fatty acid metabolism. It functions in the pathway steroid metabolism; cholesterol metabolism. Its function is as follows. A cytochrome P450 monooxygenase involved in the metabolism of fatty acids, steroids and retinoids. Mechanistically, uses molecular oxygen inserting one oxygen atom into a substrate, and reducing the second into a water molecule, with two electrons provided by NADPH via cytochrome P450 reductase (NADPH--hemoprotein reductase). Catalyzes the epoxidation of double bonds of polyunsaturated fatty acids (PUFA). Metabolizes endocannabinoid arachidonoylethanolamide (anandamide) to 20-hydroxyeicosatetraenoic acid ethanolamide (20-HETE-EA) and 8,9-, 11,12-, and 14,15-epoxyeicosatrienoic acid ethanolamides (EpETrE-EAs), potentially modulating endocannabinoid system signaling. Catalyzes the hydroxylation of carbon-hydrogen bonds. Metabolizes cholesterol toward 25-hydroxycholesterol, a physiological regulator of cellular cholesterol homeostasis. Catalyzes the oxidative transformations of all-trans retinol to all-trans retinal, a precursor for the active form all-trans-retinoic acid. Also involved in the oxidative metabolism of drugs such as antiarrhythmics, adrenoceptor antagonists, and tricyclic antidepressants. This is Cytochrome P450 2D6 from Homo sapiens (Human).